Reading from the N-terminus, the 485-residue chain is Glutamyl-tRNA(Gln) amidotransferase subunit A (485 aa).

Catalysis depends on charge relay system residues K78 and S153. S177 functions as the Acyl-ester intermediate in the catalytic mechanism.

It belongs to the amidase family. GatA subfamily. In terms of assembly, heterotrimer of A, B and C subunits.

The catalysed reaction is L-glutamyl-tRNA(Gln) + L-glutamine + ATP + H2O = L-glutaminyl-tRNA(Gln) + L-glutamate + ADP + phosphate + H(+). Allows the formation of correctly charged Gln-tRNA(Gln) through the transamidation of misacylated Glu-tRNA(Gln) in organisms which lack glutaminyl-tRNA synthetase. The reaction takes place in the presence of glutamine and ATP through an activated gamma-phospho-Glu-tRNA(Gln). The chain is Glutamyl-tRNA(Gln) amidotransferase subunit A from Bacillus cereus (strain ATCC 14579 / DSM 31 / CCUG 7414 / JCM 2152 / NBRC 15305 / NCIMB 9373 / NCTC 2599 / NRRL B-3711).